A 171-amino-acid polypeptide reads, in one-letter code: Small ribosomal subunit protein mS25 (171 aa).

It belongs to the mitochondrion-specific ribosomal protein mS25 family. In terms of assembly, component of the mitochondrial ribosome small subunit (28S) which comprises a 12S rRNA and about 30 distinct proteins.

It localises to the mitochondrion. The sequence is that of Small ribosomal subunit protein mS25 (Mrps25) from Rattus norvegicus (Rat).